Consider the following 766-residue polypeptide: ABC-type oligopeptide transporter ABCB9 (766 aa).

The next 8 helical transmembrane spans lie at 7–27, 47–67, 84–104, 116–136, 185–205, 225–245, 319–339, and 416–436; these read VVVTLAFMSVDICVTTAIYVF, VLDLWAACLYRSCLLLGATIG, LVITLVCLFVGIYAMVKLLLF, FWALFVWTYISLGASFLLWWL, VAFLVAASFFLIVAALGETFL, FSTAVVIVCLLAIGSSFAAGI, VFMFSLSWQLSLVTFMGFPII, and SGLTLLVVQVSILYYGGHLVI. Residues 188 to 471 enclose the ABC transmembrane type-1 domain; the sequence is LVAASFFLIV…VGSVYSGLMQ (284 aa). One can recognise an ABC transporter domain in the interval 504 to 740; that stretch reads VDFENVTFTY…GGLYAKLVQR (237 aa). 539–546 serves as a coordination point for ATP; it reads GPSGSGKS.

It belongs to the ABC transporter superfamily. ABCB family. MHC peptide exporter (TC 3.A.1.209) subfamily. In terms of assembly, homodimer. Interacts (via TMD0 region) with LAMP1; this interaction strongly stabilizes ABCB9 and protects ABCB9 against lysosomal degradation. Interacts (via TMD0 region) with LAMP2 (isoform LAMP-2B). Interacts (via TMD0) with YIF1B; this interaction allows (but is not essential) the ER-to-Golgi trafficking and strongly depends on a salt bridge within TMD0. As to expression, highly expressed in testis, and at moderate levels in brain, spinal cord, and thyroid. Not expressed in monocytes but strongly expressed during differentiation of monocytes to dendritic cells and macrophages.

The protein resides in the lysosome membrane. It carries out the reaction a [oligopeptide](in) + ATP + H2O = a [oligopeptide](out) + ADP + phosphate + H(+). With respect to regulation, transport activity is limited by threshold levels of luminal peptide. ATP hydrolysis is reduced in the presence of the spatial challenging 18-mer peptide by 50% and the branched 16-mer peptide by 75%. Transport rate of the longer peptides is strongly reduced. Functionally, ATP-dependent low-affinity peptide transporter which translocates a broad spectrum of peptides from the cytosol to the lysosomal lumen for degradation. Displays a broad peptide length specificity from 6-mer up to at least 59-mer peptides with an optimum of 23-mers. Binds and transports smaller and larger peptides with the same affinity. Favors positively charged, aromatic or hydrophobic residues in the N- and C-terminal positions whereas negatively charged residues as well as asparagine and methionine are not favored. This chain is ABC-type oligopeptide transporter ABCB9, found in Homo sapiens (Human).